Reading from the N-terminus, the 489-residue chain is Probable transporter MCH1 (489 aa).

Helical transmembrane passes span 34–54 (ISLISCLCAGSVLLFALFTPV), 68–88 (IIGSFTSIGMYLPLPVLGYLA), 94–114 (VLLSVISVLFFSPGYTLAATV), 124–144 (LAISFGLIGCATSALYFTALL), 156–175 (LTISAPVTCYGLSSLIGSRV), 196–216 (FSFLYFFLGLFDWVSASVVSI), 262–282 (ISTYVLLFSLLLSIGPSEMYI), 302–324 (VAIHAVFSTLSRLSLGALSDFLV), 335–355 (LLSIIVLGFFTQIFIATSTFV), 359–379 (YYIISALSGFSYGGLFTLYPT), 403–423 (IGSTTFGMVFGLVYDSACGVF), and 463–483 (SLIIINHLHYIKYIYLLILRI).

It belongs to the major facilitator superfamily.

It localises to the vacuole membrane. Probable transporter. The polypeptide is Probable transporter MCH1 (MCH1) (Wickerhamomyces anomalus (Yeast)).